The primary structure comprises 577 residues: Calcium-dependent protein kinase 22 (577 aa).

Residue Gly-2 is the site of N-myristoyl glycine attachment. A Protein kinase domain is found at 105 to 368 (YRLGAELGRG…AKEVLEHPWL (264 aa)). ATP contacts are provided by residues 111 to 119 (LGRGEFGVT) and Lys-134. The active-site Proton acceptor is Asp-234. The autoinhibitory domain stretch occupies residues 374 to 404 (APNVSLGEIVRSRLMQFSAMNKFKKKALGVV). EF-hand domains lie at 411 to 446 (EEMD…NGHP), 447 to 482 (VPET…IKKM), 483 to 518 (SNEE…ELGP), and 520 to 553 (EQVV…GSDW). Ca(2+) contacts are provided by Asp-424, Asp-426, Ser-428, Asn-430, Asp-435, Asp-460, Asp-462, Asn-464, Thr-466, Glu-471, Asp-496, Asp-498, Asn-500, Glu-507, Asp-531, Asp-533, Asp-535, Arg-537, and Glu-542.

This sequence belongs to the protein kinase superfamily. Ser/Thr protein kinase family. CDPK subfamily.

It is found in the membrane. The catalysed reaction is L-seryl-[protein] + ATP = O-phospho-L-seryl-[protein] + ADP + H(+). It catalyses the reaction L-threonyl-[protein] + ATP = O-phospho-L-threonyl-[protein] + ADP + H(+). Activated by calcium. Autophosphorylation may play an important role in the regulation of the kinase activity. Functionally, may play a role in signal transduction pathways that involve calcium as a second messenger. This chain is Calcium-dependent protein kinase 22, found in Oryza sativa subsp. japonica (Rice).